The chain runs to 957 residues: Glycine dehydrogenase (decarboxylating) (957 aa).

Position 708 is an N6-(pyridoxal phosphate)lysine (Lys-708).

The protein belongs to the GcvP family. As to quaternary structure, the glycine cleavage system is composed of four proteins: P, T, L and H. Pyridoxal 5'-phosphate is required as a cofactor.

The catalysed reaction is N(6)-[(R)-lipoyl]-L-lysyl-[glycine-cleavage complex H protein] + glycine + H(+) = N(6)-[(R)-S(8)-aminomethyldihydrolipoyl]-L-lysyl-[glycine-cleavage complex H protein] + CO2. In terms of biological role, the glycine cleavage system catalyzes the degradation of glycine. The P protein binds the alpha-amino group of glycine through its pyridoxal phosphate cofactor; CO(2) is released and the remaining methylamine moiety is then transferred to the lipoamide cofactor of the H protein. The chain is Glycine dehydrogenase (decarboxylating) from Shigella dysenteriae serotype 1 (strain Sd197).